A 432-amino-acid polypeptide reads, in one-letter code: Putative transferase At1g60990, chloroplastic (432 aa).

A chloroplast-targeting transit peptide spans 1–57 (MNLLQSCKDMAMMMRIDSVSHITNTALLPCLYNGTVLRRRSLSLRKCGFRERKFQLR).

Belongs to the GcvT family. Expressed in young leaves (at protein level).

The protein resides in the plastid. Its subcellular location is the chloroplast. In terms of biological role, folate-dependent protein involved in Fe/S cluster biogenesis. Functionally complements an E.coli mutant defective in ygfZ. In Arabidopsis thaliana (Mouse-ear cress), this protein is Putative transferase At1g60990, chloroplastic.